A 140-amino-acid polypeptide reads, in one-letter code: Large ribosomal subunit protein uL13 (140 aa).

Part of the 50S ribosomal subunit.

This protein is one of the early assembly proteins of the 50S ribosomal subunit, although it is not seen to bind rRNA by itself. It is important during the early stages of 50S assembly. This chain is Large ribosomal subunit protein uL13, found in Thermus thermophilus (strain ATCC 27634 / DSM 579 / HB8).